We begin with the raw amino-acid sequence, 147 residues long: Deoxyuridine 5'-triphosphate nucleotidohydrolase (147 aa).

Substrate-binding positions include 63–65 (RSG), N76, and 80–82 (TID).

This sequence belongs to the dUTPase family. Requires Mg(2+) as cofactor.

The enzyme catalyses dUTP + H2O = dUMP + diphosphate + H(+). It participates in pyrimidine metabolism; dUMP biosynthesis; dUMP from dCTP (dUTP route): step 2/2. This enzyme is involved in nucleotide metabolism: it produces dUMP, the immediate precursor of thymidine nucleotides and it decreases the intracellular concentration of dUTP so that uracil cannot be incorporated into DNA. In Chlamydia caviae (strain ATCC VR-813 / DSM 19441 / 03DC25 / GPIC) (Chlamydophila caviae), this protein is Deoxyuridine 5'-triphosphate nucleotidohydrolase.